A 217-amino-acid polypeptide reads, in one-letter code: Large ribosomal subunit protein uL1 (217 aa).

The protein belongs to the universal ribosomal protein uL1 family.

The protein is Large ribosomal subunit protein uL1 (RPL10A) of Eremothecium gossypii (strain ATCC 10895 / CBS 109.51 / FGSC 9923 / NRRL Y-1056) (Yeast).